Reading from the N-terminus, the 491-residue chain is UDP-N-acetylmuramate--L-alanine ligase (491 aa).

126–132 (GTHGKTT) lines the ATP pocket.

Belongs to the MurCDEF family.

The protein localises to the cytoplasm. It carries out the reaction UDP-N-acetyl-alpha-D-muramate + L-alanine + ATP = UDP-N-acetyl-alpha-D-muramoyl-L-alanine + ADP + phosphate + H(+). It functions in the pathway cell wall biogenesis; peptidoglycan biosynthesis. In terms of biological role, cell wall formation. The chain is UDP-N-acetylmuramate--L-alanine ligase from Photorhabdus laumondii subsp. laumondii (strain DSM 15139 / CIP 105565 / TT01) (Photorhabdus luminescens subsp. laumondii).